The sequence spans 228 residues: UPF0758 protein CLI_3057 (228 aa).

Positions 106 to 228 constitute an MPN domain; it reads KINTPLDVSN…YVSMKEKGTI (123 aa). Residues His-177, His-179, and Asp-190 each contribute to the Zn(2+) site. The JAMM motif motif lies at 177–190; the sequence is HNHPSGDPTPSKED.

It belongs to the UPF0758 family.

The sequence is that of UPF0758 protein CLI_3057 from Clostridium botulinum (strain Langeland / NCTC 10281 / Type F).